We begin with the raw amino-acid sequence, 162 residues long: Neuritin-like protein (162 aa).

The N-terminal stretch at 1–32 (MMCNCCHCHWRRRCQRLPCALTLLLLLPLAVA) is a signal peptide. Alanine 136 is lipidated: GPI-anchor amidated alanine. Residues 137-162 (PALAPAPAPVLLAAALALACLLGPLA) constitute a propeptide, removed in mature form.

The protein belongs to the neuritin family.

Its subcellular location is the cell membrane. The sequence is that of Neuritin-like protein (Nrn1l) from Mus musculus (Mouse).